We begin with the raw amino-acid sequence, 195 residues long: Rubrerythrin-1 (195 aa).

In terms of domain architecture, Ferritin-like diiron spans 3 to 150 (SLKGTKTAEN…ALLKNIEENK (148 aa)). Residues E20, E53, E98, E101, E132, H135, C162, C165, C178, and C181 each coordinate Fe(3+). Residues 157–191 (VKFWKCIKCGYIFEGKTAPKVCPACLHPQAYFEIL) enclose the Rubredoxin-like domain.

Homodimer. It depends on Fe(3+) as a cofactor.

The enzyme catalyses H2O2 + NADH + H(+) = NAD(+) + 2 H2O. Rubredoxin (Rd) increases the NADH consumption rate by serving as an intermediary electron-transfer shuttle between NROR and RubY. Functionally, functions as the terminal component of an NADH peroxidase (NADH:H(2)O(2) oxidoreductase) when using NADH:rubredoxin oxidoreductase (NROR) as the electron transport intermediary from NADH to RubY. This Clostridium acetobutylicum (strain ATCC 824 / DSM 792 / JCM 1419 / IAM 19013 / LMG 5710 / NBRC 13948 / NRRL B-527 / VKM B-1787 / 2291 / W) protein is Rubrerythrin-1 (rbr1).